A 383-amino-acid chain; its full sequence is NifS-like protein (383 aa).

Pyridoxal 5'-phosphate-binding positions include 58-59 (SE) and 184-186 (SIN).

Belongs to the class-V pyridoxal-phosphate-dependent aminotransferase family. NifS/IscS subfamily. It depends on pyridoxal 5'-phosphate as a cofactor.

The protein resides in the virion. This African swine fever virus (strain Badajoz 1971 Vero-adapted) (Ba71V) protein is NifS-like protein.